A 108-amino-acid chain; its full sequence is Complement inhibitor CirpT2 (108 aa).

The signal sequence occupies residues 1 to 19 (MRTLVASLCVFAVFSAVCC). Intrachain disulfides connect Cys-40/Cys-64, Cys-59/Cys-98, Cys-76/Cys-99, and Cys-85/Cys-104.

This sequence belongs to the CirpT family. Expressed in salivary glands.

It is found in the secreted. Functionally, complement inhibitor. Prevents complement-mediated activation of C5 by sterically preventing direct binding of C5 to its convertase (binding with domains MG4 and MG5). Binds C5 at a different binding site than the other tick complement inhibitors OmCI and RaCI3, and the drug eculizumab. Inhibits the complement in human, rat and guinea pig, and also shows a reduced inhibition in rabbit and pig. In Dermacentor andersoni (Rocky mountain wood tick), this protein is Complement inhibitor CirpT2.